Consider the following 246-residue polypeptide: tRNA pseudouridine synthase A (246 aa).

D53 serves as the catalytic Nucleophile. Y111 serves as a coordination point for substrate.

It belongs to the tRNA pseudouridine synthase TruA family. As to quaternary structure, homodimer.

The catalysed reaction is uridine(38/39/40) in tRNA = pseudouridine(38/39/40) in tRNA. In terms of biological role, formation of pseudouridine at positions 38, 39 and 40 in the anticodon stem and loop of transfer RNAs. This chain is tRNA pseudouridine synthase A, found in Anoxybacillus flavithermus (strain DSM 21510 / WK1).